A 207-amino-acid polypeptide reads, in one-letter code: Superoxide dismutase [Mn] (207 aa).

His28, His76, Asp160, and His164 together coordinate Mn(2+).

The protein belongs to the iron/manganese superoxide dismutase family. In terms of assembly, homotetramer. Mn(2+) is required as a cofactor.

Its subcellular location is the secreted. The catalysed reaction is 2 superoxide + 2 H(+) = H2O2 + O2. In terms of biological role, destroys superoxide anion radicals which are normally produced within the cells and which are toxic to biological systems. The sequence is that of Superoxide dismutase [Mn] (sodA) from Mycolicibacterium smegmatis (Mycobacterium smegmatis).